The chain runs to 93 residues: UPF0298 protein LMHCC_0506 (93 aa).

It belongs to the UPF0298 family.

It is found in the cytoplasm. The chain is UPF0298 protein LMHCC_0506 from Listeria monocytogenes serotype 4a (strain HCC23).